Reading from the N-terminus, the 179-residue chain is Large ribosomal subunit protein uL6 (179 aa).

The protein belongs to the universal ribosomal protein uL6 family. In terms of assembly, part of the 50S ribosomal subunit.

This protein binds to the 23S rRNA, and is important in its secondary structure. It is located near the subunit interface in the base of the L7/L12 stalk, and near the tRNA binding site of the peptidyltransferase center. This chain is Large ribosomal subunit protein uL6, found in Geotalea uraniireducens (strain Rf4) (Geobacter uraniireducens).